A 478-amino-acid polypeptide reads, in one-letter code: Protein nucleotidyltransferase YdiU (478 aa).

Residues G84, G86, R87, K107, D119, G120, R170, and R177 each coordinate ATP. D246 functions as the Proton acceptor in the catalytic mechanism. Mg(2+) contacts are provided by N247 and D256. An ATP-binding site is contributed by D256.

This sequence belongs to the SELO family. It depends on Mg(2+) as a cofactor. Mn(2+) serves as cofactor.

The enzyme catalyses L-seryl-[protein] + ATP = 3-O-(5'-adenylyl)-L-seryl-[protein] + diphosphate. It catalyses the reaction L-threonyl-[protein] + ATP = 3-O-(5'-adenylyl)-L-threonyl-[protein] + diphosphate. The catalysed reaction is L-tyrosyl-[protein] + ATP = O-(5'-adenylyl)-L-tyrosyl-[protein] + diphosphate. It carries out the reaction L-histidyl-[protein] + UTP = N(tele)-(5'-uridylyl)-L-histidyl-[protein] + diphosphate. The enzyme catalyses L-seryl-[protein] + UTP = O-(5'-uridylyl)-L-seryl-[protein] + diphosphate. It catalyses the reaction L-tyrosyl-[protein] + UTP = O-(5'-uridylyl)-L-tyrosyl-[protein] + diphosphate. Nucleotidyltransferase involved in the post-translational modification of proteins. It can catalyze the addition of adenosine monophosphate (AMP) or uridine monophosphate (UMP) to a protein, resulting in modifications known as AMPylation and UMPylation. The polypeptide is Protein nucleotidyltransferase YdiU (Escherichia coli O157:H7).